Consider the following 338-residue polypeptide: Ferredoxin--NADP reductase (338 aa).

FAD is bound by residues threonine 14, aspartate 33, glutamine 41, tyrosine 46, valine 86, phenylalanine 120, aspartate 284, and threonine 325.

It belongs to the ferredoxin--NADP reductase type 2 family. As to quaternary structure, homodimer. FAD serves as cofactor.

It carries out the reaction 2 reduced [2Fe-2S]-[ferredoxin] + NADP(+) + H(+) = 2 oxidized [2Fe-2S]-[ferredoxin] + NADPH. This Pelagibacter ubique (strain HTCC1062) protein is Ferredoxin--NADP reductase.